We begin with the raw amino-acid sequence, 158 residues long: Cyclic pyranopterin monophosphate synthase (158 aa).

Substrate-binding positions include 76 to 78 (LCH) and 114 to 115 (ME). D129 is a catalytic residue.

It belongs to the MoaC family. As to quaternary structure, homohexamer; trimer of dimers.

The catalysed reaction is (8S)-3',8-cyclo-7,8-dihydroguanosine 5'-triphosphate = cyclic pyranopterin phosphate + diphosphate. The protein operates within cofactor biosynthesis; molybdopterin biosynthesis. Its function is as follows. Catalyzes the conversion of (8S)-3',8-cyclo-7,8-dihydroguanosine 5'-triphosphate to cyclic pyranopterin monophosphate (cPMP). This is Cyclic pyranopterin monophosphate synthase from Shewanella sediminis (strain HAW-EB3).